A 156-amino-acid polypeptide reads, in one-letter code: Succinate dehydrogenase assembly factor 2-B, mitochondrial (156 aa).

The transit peptide at 1–24 (MLRQFIISRVGRRLQLPMITQSRL) directs the protein to the mitochondrion.

Belongs to the SDHAF2 family. As to quaternary structure, interacts with the flavoprotein subunit within the SDH catalytic dimer.

It is found in the mitochondrion matrix. Functionally, plays an essential role in the assembly of succinate dehydrogenase (SDH), an enzyme complex (also referred to as respiratory complex II) that is a component of both the tricarboxylic acid (TCA) cycle and the mitochondrial electron transport chain, and which couples the oxidation of succinate to fumarate with the reduction of ubiquinone (coenzyme Q) to ubiquinol. Required for flavinylation (covalent attachment of FAD) of the flavoprotein subunit of the SDH catalytic dimer. This is Succinate dehydrogenase assembly factor 2-B, mitochondrial from Drosophila sechellia (Fruit fly).